The sequence spans 284 residues: Deoxyribonuclease-1 (284 aa).

Positions 1-22 are cleaved as a signal peptide; that stretch reads MRYTGLMGILLTLVNLLQLAAT. N40 carries N-linked (GlcNAc...) asparagine glycosylation. E100 is a catalytic residue. A disulfide bond links C123 and C126. A glycan (N-linked (GlcNAc...) asparagine) is linked at N128. Residue H156 is part of the active site. A disulfide bridge connects residues C195 and C231.

The protein belongs to the DNase I family. Ca(2+) is required as a cofactor. It depends on Mg(2+) as a cofactor.

It localises to the secreted. The protein localises to the zymogen granule. The protein resides in the nucleus envelope. The enzyme catalyses Endonucleolytic cleavage to 5'-phosphodinucleotide and 5'-phosphooligonucleotide end-products.. Serum endocuclease secreted into body fluids by a wide variety of exocrine and endocrine organs. Expressed by non-hematopoietic tissues and preferentially cleaves protein-free DNA. Among other functions, seems to be involved in cell death by apoptosis. Binds specifically to G-actin and blocks actin polymerization. Together with DNASE1L3, plays a key role in degrading neutrophil extracellular traps (NETs). NETs are mainly composed of DNA fibers and are released by neutrophils to bind pathogens during inflammation. Degradation of intravascular NETs by DNASE1 and DNASE1L3 is required to prevent formation of clots that obstruct blood vessels and cause organ damage following inflammation. The protein is Deoxyribonuclease-1 (Dnase1) of Rattus norvegicus (Rat).